We begin with the raw amino-acid sequence, 231 residues long: Ribosomal RNA large subunit methyltransferase E (231 aa).

Residues glycine 76, tryptophan 78, aspartate 99, aspartate 115, and aspartate 139 each coordinate S-adenosyl-L-methionine. The active-site Proton acceptor is the lysine 179.

This sequence belongs to the class I-like SAM-binding methyltransferase superfamily. RNA methyltransferase RlmE family.

Its subcellular location is the cytoplasm. It carries out the reaction uridine(2552) in 23S rRNA + S-adenosyl-L-methionine = 2'-O-methyluridine(2552) in 23S rRNA + S-adenosyl-L-homocysteine + H(+). Its function is as follows. Specifically methylates the uridine in position 2552 of 23S rRNA at the 2'-O position of the ribose in the fully assembled 50S ribosomal subunit. The polypeptide is Ribosomal RNA large subunit methyltransferase E (Bradyrhizobium sp. (strain BTAi1 / ATCC BAA-1182)).